A 111-amino-acid chain; its full sequence is Probable 4-amino-4-deoxy-L-arabinose-phosphoundecaprenol flippase subunit ArnE (111 aa).

Over 1–35 the chain is Cytoplasmic; sequence MIWLTLVFASLLSVAGQLCQKQATCFAAVNKRRKH. Residues 36 to 56 form a helical membrane-spanning segment; that stretch reads IVLWLGLALACLGLAMVLWLL. The EamA domain occupies 40 to 109; the sequence is LGLALACLGL…IIGGIVILGS (70 aa). Residues 57–60 are Periplasmic-facing; it reads VLQN. The chain crosses the membrane as a helical span at residues 61-81; it reads VPVGIAYPMLSLNFVWVTLAA. Over 82–87 the chain is Cytoplasmic; sequence VKLWHE. Residues 88–108 form a helical membrane-spanning segment; sequence PVSLRHWCGVAFIIGGIVILG. Residues 109 to 111 are Periplasmic-facing; the sequence is STV.

The protein belongs to the ArnE family. As to quaternary structure, heterodimer of ArnE and ArnF.

It localises to the cell inner membrane. It functions in the pathway bacterial outer membrane biogenesis; lipopolysaccharide biosynthesis. Translocates 4-amino-4-deoxy-L-arabinose-phosphoundecaprenol (alpha-L-Ara4N-phosphoundecaprenol) from the cytoplasmic to the periplasmic side of the inner membrane. This Escherichia coli (strain UTI89 / UPEC) protein is Probable 4-amino-4-deoxy-L-arabinose-phosphoundecaprenol flippase subunit ArnE.